A 194-amino-acid polypeptide reads, in one-letter code: NADH-quinone oxidoreductase subunit B (194 aa).

Residues Cys72, Cys73, Cys137, and Cys167 each contribute to the [4Fe-4S] cluster site.

This sequence belongs to the complex I 20 kDa subunit family. NDH-1 is composed of 14 different subunits. Subunits NuoB, C, D, E, F, and G constitute the peripheral sector of the complex. Requires [4Fe-4S] cluster as cofactor.

The protein resides in the cell inner membrane. The enzyme catalyses a quinone + NADH + 5 H(+)(in) = a quinol + NAD(+) + 4 H(+)(out). NDH-1 shuttles electrons from NADH, via FMN and iron-sulfur (Fe-S) centers, to quinones in the respiratory chain. Couples the redox reaction to proton translocation (for every two electrons transferred, four hydrogen ions are translocated across the cytoplasmic membrane), and thus conserves the redox energy in a proton gradient. The protein is NADH-quinone oxidoreductase subunit B of Granulibacter bethesdensis (strain ATCC BAA-1260 / CGDNIH1).